The primary structure comprises 190 residues: GTP cyclohydrolase 1 (190 aa).

Zn(2+) is bound by residues C79, H82, and C151.

Belongs to the GTP cyclohydrolase I family. Toroid-shaped homodecamer, composed of two pentamers of five dimers.

The enzyme catalyses GTP + H2O = 7,8-dihydroneopterin 3'-triphosphate + formate + H(+). Its pathway is cofactor biosynthesis; 7,8-dihydroneopterin triphosphate biosynthesis; 7,8-dihydroneopterin triphosphate from GTP: step 1/1. In Clostridioides difficile (strain 630) (Peptoclostridium difficile), this protein is GTP cyclohydrolase 1.